Here is a 341-residue protein sequence, read N- to C-terminus: Methionine import ATP-binding protein MetN (341 aa).

An ABC transporter domain is found at 9–247 (ISVEQLNKEI…PQSAITEELF (239 aa)). 41–48 (GHSGSGKS) serves as a coordination point for ATP.

It belongs to the ABC transporter superfamily. Methionine importer (TC 3.A.1.24) family. In terms of assembly, the complex is composed of two ATP-binding proteins (MetN), two transmembrane proteins (MetI) and a solute-binding protein (MetQ).

It localises to the cell inner membrane. The catalysed reaction is L-methionine(out) + ATP + H2O = L-methionine(in) + ADP + phosphate + H(+). It carries out the reaction D-methionine(out) + ATP + H2O = D-methionine(in) + ADP + phosphate + H(+). Functionally, part of the ABC transporter complex MetNIQ involved in methionine import. Responsible for energy coupling to the transport system. The sequence is that of Methionine import ATP-binding protein MetN from Chlamydia abortus (strain DSM 27085 / S26/3) (Chlamydophila abortus).